A 526-amino-acid polypeptide reads, in one-letter code: Cell adhesion molecule CEACAM1 (526 aa).

The signal sequence occupies residues 1 to 34 (MGHLSAPLHRVRVPWQGLLLTASLLTFWNPPTTA). Q35 is modified (pyrrolidone carboxylic acid). In terms of domain architecture, Ig-like V-type spans 35-142 (QLTTESMPFN…EATGQFHVYP (108 aa)). The Extracellular segment spans residues 35-428 (QLTTESMPFN…LPQENGLSPG (394 aa)). The interval 39–142 (ESMPFNVAEG…EATGQFHVYP (104 aa)) is required for homophilic binding. N-linked (GlcNAc...) asparagine glycans are attached at residues N104, N111, N115, N152, N182, N197, N208, N224, N232, N254, N274, N288, N292, N302, N309, N345, N351, N363, N378, and N405. 3 consecutive Ig-like C2-type domains span residues 145–232 (PKPS…VTLN), 237–317 (PDTP…KTII), and 323–413 (PVVA…IMLN). C167 and C215 are disulfide-bonded. C259 and C299 form a disulfide bridge. Residues C348 and C396 are joined by a disulfide bond. A helical transmembrane segment spans residues 429–452 (AIAGIVIGVVALVALIAVALACFL). Residues 450 to 462 (CFLHFGKTGRASD) form an interaction with calmodulin region. The interval 452–526 (LHFGKTGRAS…EIIYSEVKKQ (75 aa)) is interaction with FLNA. At 453-526 (HFGKTGRASD…EIIYSEVKKQ (74 aa)) the chain is on the cytoplasmic side. The segment covering 461 to 482 (SDQRDLTEHKPSVSNHTQDHSN) has biased composition (basic and acidic residues). The interval 461–513 (SDQRDLTEHKPSVSNHTQDHSNDPPNKMNEVTYSTLNFEAQQPTQPTSASPSL) is disordered. Residues 489-513 (NEVTYSTLNFEAQQPTQPTSASPSL) are compositionally biased toward polar residues. The tract at residues 489–526 (NEVTYSTLNFEAQQPTQPTSASPSLTATEIIYSEVKKQ) is required for interaction with PTPN11 and PTPN6 and for control of phosphorylation level. A Phosphotyrosine; by SRC, LCK, INSR and EGFR modification is found at Y493. Position 508 is a phosphoserine (S508). A Phosphotyrosine; by INSR, SRC and LCK modification is found at Y520. The interval 520–523 (YSEV) is essential for interaction with PTPN11 and PTPN6.

The protein belongs to the immunoglobulin superfamily. CEA family. As to quaternary structure, monomer. Oligomer. Heterodimer. Homodimer. Cis-dimer/oligomer (via Ig-like C2-type and/or via cytoplasmic domains); induced by trans-homophilic cell adhesion through an allosteric mechanism transmitted by the Ig-like V-type domain, and is regulated by intracellular calcium and calmodulin. Interacts (via cytoplasmic domain) with calmodulin in a calcium dependent manner; reduces homophilic cell adhesion through dissociation of dimer. Isoform 1 interacts (via cytoplasmic domain) with PTPN11 (preferentially) and PTPN6; cis-homodimer form is preferred; this interaction is decreased by formation of Isoform 1 /Isoform 8 cis-heterodimers and is dependent on the monomer/dimer equilibrium; this interaction is phosphorylation-dependent. Isoform 1 interacts with LYN. Isoform 1 interacts (via cytoplasmic domain) with SRC (via SH2 domain); this interaction is regulated by trans-homophilic cell adhesion. Isoform 1 interacts (via cytoplasmic domain) with LCK; mediates phosphorylation at Tyr-493 and Tyr-520 resulting in PTPN6 association. Isoform 1 interacts with PTPN6; this interaction is phosphorylation-dependent and causes a profound decrease in TCR stimulation-induced CD247 and ZAP70 phosphorylation. Isoform 1 interacts with TCR/CD3 complex through TCR beta chain and CD3E; colocalizes at the cell surface and upon stimulation of the TCR/CD3 complex recruits PTPN6 in the TCR/CD3 complex, resulting in dephosphorylation of CD247 and ZAP70. Isoform 1 interacts (via cytoplasmic domain) with SHC1 (via SH2 domain); SHC1 mediates interaction with INSR or EGFR in a Ser-508 phosphorylation-dependent manner. Isoform 1 interacts with EGFR; the interaction is indirect. Isoform 1 interacts with CSF3R; down-regulates the CSF3R-STAT3 pathway through recruitment of PTPN6 that dephosphorylates CSF3R. Isoform 1 (phosphorylated form) interacts with TLR4 and SYK; recruits PTPN6 that dephosphorylates SYK, reducing the production of reactive oxygen species (ROS) and lysosome disruption, leading to a reduction of the inflammasome activity. Isoform 1 interacts with FLNA; inhibits cell migration and cell scattering by interfering with the interaction of FLNA with RALA. Isoform 1 interacts (via cytoplasmic domain) with PXN; the interaction is phosphotyrosyl-dependent. Isoform 1 interacts with KLRK1; recruits PTPN6 that dephosphorylates VAV1. Isoform 1 interacts with CEACAM8. Isoform 1 interacts with FASN; this interaction is insulin and phosphorylation-dependent; reduces fatty-acid synthase activity. Interacts (via Ig-like V-type) with HAVCR2 (via Ig-like V-type); facilitates the maturation and cell surface expression of HAVCR2 thereby regulating T cell tolerance induction. Isoform 8 interacts (via the cytoplasmic domain) with ANXA2; this interaction is regulated by phosphorylation and appears in the AIIt complex. Interacts (via Lewis X moieties) with CD209 (via C-type lectin domain); this interaction is regulated by the glycosylation pattern of CEACAM1 on cell types and regulates contact between dendritic cells and neutrophils. Post-translationally, phosphorylated on serine and tyrosine. Isoform 1 is phosphorylated on tyrosine by Src family kinases like SRC and LCK and by receptor like CSF3R, EGFR and INSR upon stimulation. Phosphorylated at Ser-508; mediates activity. Phosphorylated at Tyr-493; regulates activity. Phosphorylated at Tyr-493 by EGFR and INSR upon stimulation; this phosphorylation is Ser-508-phosphorylation-dependent; mediates cellular internalization; increases interaction with downstream proteins like SHC1 and FASN. Phosphorylated at Tyr-493 and Tyr-520 by LCK; mediates PTPN6 association and is regulated by homophilic ligation of CEACAM1 in the absence of T cell activation. Phosphorylated at Tyr-520; mediates interaction with PTPN11. In terms of processing, phosphorylated on serine and threonine. As to expression, expressed in columnar epithelial cells of the colon (at protein level). The predominant forms expressed by T cells are those containing a long cytoplasmic domain. Expressed in granulocytes and lymphocytes. Leukocytes only express isoforms 6 and isoform 1.

The protein localises to the cell membrane. The protein resides in the lateral cell membrane. Its subcellular location is the apical cell membrane. It localises to the basal cell membrane. It is found in the cell junction. The protein localises to the adherens junction. The protein resides in the secreted. Its subcellular location is the cytoplasmic vesicle. It localises to the secretory vesicle membrane. It is found in the cell projection. The protein localises to the microvillus membrane. In terms of biological role, cell adhesion protein that mediates homophilic cell adhesion in a calcium-independent manner. Plays a role as coinhibitory receptor in immune response, insulin action and also functions as an activator during angiogenesis. Its coinhibitory receptor function is phosphorylation- and PTPN6 -dependent, which in turn, suppress signal transduction of associated receptors by dephosphorylation of their downstream effectors. Plays a role in immune response, of T cells, natural killer (NK) and neutrophils. Upon TCR/CD3 complex stimulation, inhibits TCR-mediated cytotoxicity by blocking granule exocytosis by mediating homophilic binding to adjacent cells, allowing interaction with and phosphorylation by LCK and interaction with the TCR/CD3 complex which recruits PTPN6 resulting in dephosphorylation of CD247 and ZAP70. Also inhibits T cell proliferation and cytokine production through inhibition of JNK cascade and plays a crucial role in regulating autoimmunity and anti-tumor immunity by inhibiting T cell through its interaction with HAVCR2. Upon natural killer (NK) cells activation, inhibit KLRK1-mediated cytolysis of CEACAM1-bearing tumor cells by trans-homophilic interactions with CEACAM1 on the target cell and lead to cis-interaction between CEACAM1 and KLRK1, allowing PTPN6 recruitment and then VAV1 dephosphorylation. Upon neutrophils activation negatively regulates IL1B production by recruiting PTPN6 to a SYK-TLR4-CEACAM1 complex, that dephosphorylates SYK, reducing the production of reactive oxygen species (ROS) and lysosome disruption, which in turn, reduces the activity of the inflammasome. Down-regulates neutrophil production by acting as a coinhibitory receptor for CSF3R by down-regulating the CSF3R-STAT3 pathway through recruitment of PTPN6 that dephosphorylates CSF3R. Also regulates insulin action by promoting INS clearance and regulating lipogenesis in liver through regulating insulin signaling. Upon INS stimulation, undergoes phosphorylation by INSR leading to INS clearance by increasing receptor-mediated insulin endocytosis. This inernalization promotes interaction with FASN leading to receptor-mediated insulin degradation and to reduction of FASN activity leading to negative regulation of fatty acid synthesis. INSR-mediated phosphorylation also provokes a down-regulation of cell proliferation through SHC1 interaction resulting in decrease coupling of SHC1 to the MAPK3/ERK1-MAPK1/ERK2 and phosphatidylinositol 3-kinase pathways. Functions as activator in angiogenesis by promoting blood vessel remodeling through endothelial cell differentiation and migration and in arteriogenesis by increasing the number of collateral arteries and collateral vessel calibers after ischemia. Also regulates vascular permeability through the VEGFR2 signaling pathway resulting in control of nitric oxide production. Down-regulates cell growth in response to EGF through its interaction with SHC1 that mediates interaction with EGFR resulting in decrease coupling of SHC1 to the MAPK3/ERK1-MAPK1/ERK2 pathway. Negatively regulates platelet aggregation by decreasing platelet adhesion on type I collagen through the GPVI-FcRgamma complex. Inhibits cell migration and cell scattering through interaction with FLNA; interferes with the interaction of FLNA with RALA. Mediates bile acid transport activity in a phosphorylation dependent manner. Negatively regulates osteoclastogenesis. Its function is as follows. Cell adhesion protein that mediates homophilic cell adhesion in a calcium-independent manner. Promotes populations of T cells regulating IgA production and secretion associated with control of the commensal microbiota and resistance to enteropathogens. The polypeptide is Cell adhesion molecule CEACAM1 (Homo sapiens (Human)).